The sequence spans 86 residues: Probable weak neurotoxin NNAM2 (86 aa).

A signal peptide spans 1–21 (MKTLLLTLVVVTIVCLDLGYT). Cystine bridges form between Cys-24–Cys-45, Cys-27–Cys-32, Cys-38–Cys-63, Cys-67–Cys-78, and Cys-79–Cys-84.

It belongs to the three-finger toxin family. Ancestral subfamily. Orphan group II sub-subfamily. Expressed by the venom gland.

Its subcellular location is the secreted. In terms of biological role, binds with low affinity to muscular (alpha-1-beta-1-delta-epsilon/CHRNA1-CHRNB1-CHRND-CHRNE) and very low affinity to neuronal (alpha-7/CHRNA7) nicotinic acetylcholine receptor (nAChR). In Naja atra (Chinese cobra), this protein is Probable weak neurotoxin NNAM2.